Consider the following 655-residue polypeptide: Proprotein convertase subtilisin/kexin type 4 (655 aa).

The signal sequence occupies residues 1–26 (MRPSQTELWLGLTLTLALLAVRWASA). The propeptide occupies 27–110 (QAPIYVSSWA…QQTLRRRVKR (84 aa)). One can recognise a Peptidase S8 domain in the interval 123 to 437 (QWYMNKEIQQ…YGLLDAGLLV (315 aa)). Catalysis depends on charge relay system residues Asp155, His196, and Ser370. One can recognise a P/Homo B domain in the interval 446–580 (TKPQKKCAIR…TLLLYGTAED (135 aa)). Asn472 is a glycosylation site (N-linked (GlcNAc...) asparagine).

It belongs to the peptidase S8 family. Furin subfamily. The proPCSK4 form interacts with HSPA5; the interaction takes place at the endoplasmic reticulum. In terms of processing, N-glycosylated. Synthesized in the endoplasmic reticulum as a zymogen, is matured by autocatalytic cleavage between the prodomain and the catalytic domain. Expressed abundantly in the testis since postnatal Day 16. In testis, strongly detected in round and elongated spermatids as well as spermatocytes. Also observed in residual bodies engulfed by Sertoli cells at spermatogenic stages VIII and IX. In ovaries, expressed in macrophage-like cells of the ovarian theca, interstitium and corpora lutea.

The protein localises to the cytoplasmic vesicle. It localises to the secretory vesicle. Its subcellular location is the acrosome membrane. In terms of biological role, proprotein convertase involved in the processing of hormone and other protein precursors at sites comprised of pairs of basic amino acid residues. In males, important for ADAM2 processing as well as other acrosomal proteins with roles in fertilization and critical for normal fertilization events such as sperm capacitation, acrosome reaction and binding of sperm to zona pellucida. Also plays a role in female fertility, involved in the regulation of trophoblast migration and placental development, may be through the proteolytical processing and activation of proteins such as IGF2. May also participate in folliculogenesis in the ovaries. In Mus musculus (Mouse), this protein is Proprotein convertase subtilisin/kexin type 4 (Pcsk4).